Reading from the N-terminus, the 188-residue chain is Quinone reductase (188 aa).

FMN contacts are provided by residues 13–20 (SLRKGSFN), 82–85 (EYNY), and Ser117.

It belongs to the SsuE family. In terms of assembly, homotetramer. Dimer of dimers. The tetrameric configuration has a central role in chromate reductase activity. It depends on FMN as a cofactor.

The enzyme catalyses a quinone + NADH + H(+) = a quinol + NAD(+). It carries out the reaction a quinone + NADPH + H(+) = a quinol + NADP(+). The catalysed reaction is Cr(6+) + 2 NADH + O2 = Cr(3+) + superoxide + 2 NAD(+) + 2 H(+). It catalyses the reaction Cr(6+) + 2 NADPH + O2 = Cr(3+) + superoxide + 2 NADP(+) + 2 H(+). Its function is as follows. Catalyzes the reduction of quinones. Acts by simultaneous two-electron transfer, avoiding formation of highly reactive semiquinone intermediates and producing quinols that promote tolerance of H(2)O(2). Quinone reduction is probably the primary biological role of ChrR. Can also reduce toxic chromate to insoluble and less toxic Cr(3+). Catalyzes the transfer of three electrons to Cr(6+) producing Cr(3+) and one electron to molecular oxygen without producing the toxic Cr(5+) species and only producing a minimal amount of reactive oxygen species (ROS). Chromate reduction protects the cell against chromate toxicity, but is likely a secondary activity. The protein is Quinone reductase (chrR) of Escherichia coli O157:H7.